The chain runs to 812 residues: Fibroblast growth factor receptor 1 (812 aa).

The N-terminal stretch at 1-20 (MFSGMSLLLWGVLLGAALSV) is a signal peptide. Residues 21–371 (ARPPSTLPDE…PALLASPLQL (351 aa)) lie on the Extracellular side of the membrane. The Ig-like C2-type 1 domain maps to 25–118 (STLPDEVAPK…YTVLCSVNVS (94 aa)). The cysteines at positions 54 and 100 are disulfide-linked. N-linked (GlcNAc...) asparagine glycosylation is found at N76, N116, N133, N223, N236, N260, N292, N313, and N326. The tract at residues 121-153 (LPSAEDDDEDDDNSSSEEKAAENSKPNRPLWSH) is disordered. Residues 124 to 135 (AEDDDEDDDNSS) show a composition bias toward acidic residues. Ig-like C2-type domains are found at residues 154–242 (PEKM…YQLD) and 251–353 (PILQ…AWLT). C174 and C226 are disulfide-bonded. C273 and C337 are disulfide-bonded. Residues 372-393 (EIIIYCTGAAFVSAMVVTIIIF) form a helical membrane-spanning segment. Over 394-812 (KMKHPSKKSD…KYSNGGLKKR (419 aa)) the chain is Cytoplasmic. Y457 carries the post-translational modification Phosphotyrosine; by autocatalysis. The region spanning 472–761 (LILGKPLGEG…LALSSNQEYL (290 aa)) is the Protein kinase domain. Residues 478-484 (LGEGCFG), K508, 556-558 (EYT), and N562 contribute to the ATP site. Phosphotyrosine; by autocatalysis is present on residues Y577 and Y579. The active-site Proton acceptor is the D617. The ATP site is built by R621 and D635. 4 positions are modified to phosphotyrosine; by autocatalysis: Y647, Y648, Y724, and Y760. A disordered region spans residues 784 to 812 (SGEDSMFSHDPLPDEPCLPKYSNGGLKKR).

This sequence belongs to the protein kinase superfamily. Tyr protein kinase family. Fibroblast growth factor receptor subfamily. Monomer. Homodimer after ligand binding. Interacts with il17rd. Post-translationally, autophosphorylated. Binding of FGF family members together with heparan sulfate proteoglycan or heparin promotes receptor dimerization and autophosphorylation on tyrosine residues. Autophosphorylation occurs in trans between the two FGFR molecules present in the dimer and proceeds in a highly ordered manner. Phosphotyrosine residues provide docking sites for interacting proteins and so are crucial for FGFR1 function and its regulation. Ubiquitinated. FGFR1 is rapidly ubiquitinated after autophosphorylation, leading to internalization and degradation. In terms of processing, N-glycosylated in the endoplasmic reticulum. The N-glycan chains undergo further maturation to an Endo H-resistant form in the Golgi apparatus.

Its subcellular location is the cell membrane. The protein resides in the nucleus. The protein localises to the cytoplasm. It localises to the cytosol. It is found in the cytoplasmic vesicle. It catalyses the reaction L-tyrosyl-[protein] + ATP = O-phospho-L-tyrosyl-[protein] + ADP + H(+). Present in an inactive conformation in the absence of bound ligand. Ligand binding leads to dimerization and activation by sequential autophosphorylation on tyrosine residues. In terms of biological role, tyrosine-protein kinase that acts as a cell-surface receptor for fibroblast growth factors and plays an essential role in the regulation of embryonic development, cell proliferation, differentiation and migration. Required for normal mesoderm patterning and normal skeletogenesis. Phosphorylates PLCG1, FRS2, GAB1 and SHB. Ligand binding leads to the activation of several signaling cascades. Activation of PLCG1 leads to the production of the cellular signaling molecules diacylglycerol and inositol-1,4,5-trisphosphate. Phosphorylation of FRS2 triggers recruitment of GRB2, GAB1, PIK3R1 and SOS1, and mediates activation of RAS, MAPK1/ERK2, MAPK3/ERK1 and the MAP kinase signaling pathway, as well as of the AKT1 signaling pathway. Promotes phosphorylation of SHC1, STAT1 and PTPN11/SHP2. In the nucleus, enhances RPS6KA1 and CREB1 activity and contributes to the regulation of transcription. FGFR1 signaling is down-regulated by ubiquitination, internalization and degradation. This is Fibroblast growth factor receptor 1 (fgfr1) from Xenopus laevis (African clawed frog).